Reading from the N-terminus, the 181-residue chain is BURP domain-containing protein 7 (181 aa).

The N-terminal stretch at 1-21 is a signal peptide; the sequence is MARSLAALLLLLVAAAGDSHA. The BURP domain maps to 65-181; sequence FFLEKDLFPG…RRGRRTGWRP (117 aa). A disordered region spans residues 112-181; it reads QLSVPAGSPA…RRGRRTGWRP (70 aa). Basic residues predominate over residues 128-143; it reads RPRRSPARRSNARRRS. Positions 144–157 are enriched in low complexity; it reads SPWWSSPRPASAPA. The span at 170–181 shows a compositional bias: basic residues; the sequence is GRRRGRRTGWRP.

As to expression, expressed in roots, stems, leaves and shoot.

The chain is BURP domain-containing protein 7 (BURP7) from Oryza sativa subsp. japonica (Rice).